The chain runs to 317 residues: Ribosomal RNA small subunit methyltransferase H (317 aa).

Residues 36–38 (GGH), Asp56, Phe80, Asp102, and Gln109 each bind S-adenosyl-L-methionine.

This sequence belongs to the methyltransferase superfamily. RsmH family.

The protein localises to the cytoplasm. The enzyme catalyses cytidine(1402) in 16S rRNA + S-adenosyl-L-methionine = N(4)-methylcytidine(1402) in 16S rRNA + S-adenosyl-L-homocysteine + H(+). Its function is as follows. Specifically methylates the N4 position of cytidine in position 1402 (C1402) of 16S rRNA. In Baumannia cicadellinicola subsp. Homalodisca coagulata, this protein is Ribosomal RNA small subunit methyltransferase H.